A 661-amino-acid chain; its full sequence is Acetyl-coenzyme A synthetase (661 aa).

Residues 197-200 (RGGK) and T320 each bind CoA. ATP is bound by residues 396–398 (GEP), 420–425 (DTWWQT), D511, and R526. S534 provides a ligand contact to CoA. R537 is an ATP binding site. Mg(2+) is bound by residues V548 and V553. N6-acetyllysine is present on K620.

This sequence belongs to the ATP-dependent AMP-binding enzyme family. It depends on Mg(2+) as a cofactor. In terms of processing, acetylated. Deacetylation by the SIR2-homolog deacetylase activates the enzyme.

It catalyses the reaction acetate + ATP + CoA = acetyl-CoA + AMP + diphosphate. Its function is as follows. Catalyzes the conversion of acetate into acetyl-CoA (AcCoA), an essential intermediate at the junction of anabolic and catabolic pathways. AcsA undergoes a two-step reaction. In the first half reaction, AcsA combines acetate with ATP to form acetyl-adenylate (AcAMP) intermediate. In the second half reaction, it can then transfer the acetyl group from AcAMP to the sulfhydryl group of CoA, forming the product AcCoA. In Leptospira interrogans serogroup Icterohaemorrhagiae serovar copenhageni (strain Fiocruz L1-130), this protein is Acetyl-coenzyme A synthetase.